The following is a 552-amino-acid chain: Glutamine--tRNA ligase (552 aa).

A 'HIGH' region motif is present at residues 34–44 (PEPNGYLHIGH). ATP contacts are provided by residues 35 to 37 (EPN) and 41 to 47 (HIGHAKS). 2 residues coordinate L-glutamine: Asp67 and Tyr212. Residues Thr231, 261–262 (RL), and 269–271 (MSK) each bind ATP. Positions 268–272 (IMSKR) match the 'KMSKS' region motif.

It belongs to the class-I aminoacyl-tRNA synthetase family. In terms of assembly, monomer.

The protein localises to the cytoplasm. It catalyses the reaction tRNA(Gln) + L-glutamine + ATP = L-glutaminyl-tRNA(Gln) + AMP + diphosphate. This chain is Glutamine--tRNA ligase, found in Pectobacterium atrosepticum (strain SCRI 1043 / ATCC BAA-672) (Erwinia carotovora subsp. atroseptica).